We begin with the raw amino-acid sequence, 1011 residues long: Cell division cycle-associated protein 2 (1011 aa).

Over residues 1–22 the composition is skewed to polar residues; that stretch reads MDTCSQESEPLQTKESPINNAG. Residues 1-26 form a disordered region; the sequence is MDTCSQESEPLQTKESPINNAGKTPL. S125, S130, S209, S293, and S310 each carry phosphoserine. T313 carries the phosphothreonine modification. Positions 380 to 440 constitute a PP1-binding domain; it reads KRKRVTFGED…PEWLPQPNFD (61 aa). Phosphoserine occurs at positions 391 and 398. 2 disordered regions span residues 395 to 438 and 522 to 544; these read LDES…PQPN and PCKE…KVLP. T403 carries the post-translational modification Phosphothreonine. Positions 418 to 431 are enriched in low complexity; it reads SSLSPPLLEQSPVP. Position 428 is a phosphoserine (S428). Basic and acidic residues predominate over residues 522-543; it reads PCKEKKTNRRKSQESKHADKVL. 3 positions are modified to phosphoserine: S583, S702, and S747. K753 is covalently cross-linked (Glycyl lysine isopeptide (Lys-Gly) (interchain with G-Cter in SUMO2)). Positions 790 to 803 are enriched in basic and acidic residues; the sequence is DQRKVSKSQGEDLG. 2 disordered regions span residues 790–835 and 896–1011; these read DQRK…GLHL and GLVW…LSEN. Residues 931–945 are compositionally biased toward polar residues; that stretch reads SSRQDPCTLPSTSSE. Residue S967 is modified to Phosphoserine. A compositionally biased stretch (polar residues) spans 968–983; the sequence is FCTSTLANPKSTTQSR. Positions 993 to 1011 are enriched in basic and acidic residues; sequence QKRENTLQETSRESDLSEN.

Interacts with PPP1CC. In terms of processing, phosphorylated by CDK1. May regulate its subcellular location.

It is found in the nucleus. Functionally, regulator of chromosome structure during mitosis required for condensin-depleted chromosomes to retain their compact architecture through anaphase. Acts by mediating the recruitment of phopsphatase PP1-gamma subunit (PPP1CC) to chromatin at anaphase and into the following interphase. At anaphase onset, its association with chromatin targets a pool of PPP1CC to dephosphorylate substrates. The sequence is that of Cell division cycle-associated protein 2 (CDCA2) from Bos taurus (Bovine).